The following is a 33-amino-acid chain: Protamine-M6/M7 (33 aa).

Residues 1 to 33 (PRRRRETSRPIRRRRRARRAPIRRRRRVVRRRR) are disordered.

In terms of tissue distribution, testis.

Its subcellular location is the nucleus. The protein localises to the chromosome. Its function is as follows. Protamines substitute for histones in the chromatin of sperm during the haploid phase of spermatogenesis. They compact sperm DNA into a highly condensed, stable and inactive complex. The sequence is that of Protamine-M6/M7 from Mugil cephalus (Flathead mullet).